Consider the following 336-residue polypeptide: Calcium-gated potassium channel MthK (336 aa).

Over 1-20 (MVLVIEIIRKHLPRVLKVPA) the chain is Cytoplasmic. A helical transmembrane segment spans residues 21–41 (TRILLLVLAVIIYGTAGFHFI). Residues 42–48 (EGESWTV) are Extracellular-facing. The helical; Pore-forming intramembrane region spans 49 to 58 (SLYWTFVTIA). The segment at residues 59 to 64 (TVGYGD) is an intramembrane region (pore-forming). Positions 59–64 (TVGYGD) match the Selectivity filter motif. Residues 65 to 69 (YSPST) lie on the Extracellular side of the membrane. Residues 70 to 95 (PLGMYFTVTLIVLGIGTFAVAVERLL) form a helical membrane-spanning segment. The Cytoplasmic segment spans residues 96–106 (EFLINREQMKL). One can recognise an RCK N-terminal domain in the interval 115–230 (SRHVVICGWS…RMAGADQVIS (116 aa)). Ca(2+)-binding residues include aspartate 184, glutamate 210, and glutamate 212. One can recognise an RCK C-terminal domain in the interval 252–336 (VQDVLAEEST…IERLKNYISA (85 aa)).

Homotetramer.

It localises to the cell membrane. Calcium-gated potassium channel. This Methanothermobacter thermautotrophicus (strain ATCC 29096 / DSM 1053 / JCM 10044 / NBRC 100330 / Delta H) (Methanobacterium thermoautotrophicum) protein is Calcium-gated potassium channel MthK (mthK).